Reading from the N-terminus, the 96-residue chain is UPF0235 protein Acid345_4205 (96 aa).

The protein belongs to the UPF0235 family.

The protein is UPF0235 protein Acid345_4205 of Koribacter versatilis (strain Ellin345).